We begin with the raw amino-acid sequence, 53 residues long: HOXB-AS3 peptide (53 aa).

Positions 1–53 (MPVLPGTQRYPHQRRRFQAAGGGAESGKRGSEEAPGVAWSGSESGRDAATPAW) are disordered.

In terms of assembly, interacts with HNRNPA1 (via the RGG-box). Interacts with IGF2BP2.

In terms of biological role, blocks the binding of HNRNPA1 to the intronic sequences flanking exon 9 of the PKM gene by competitively binding to the HNRNPA1 RGG-box motif. This inhibits inclusion of exon 9 and promotes inclusion of exon 10, suppressing formation of the PKM M2 isoform and promoting production of the M1 isoform. Also suppresses HNRNPA1-mediated processing of microRNA 18a (miR-18a). Promotes MYC stability through interaction with IGF2BP2. The protein is HOXB-AS3 peptide of Homo sapiens (Human).